We begin with the raw amino-acid sequence, 397 residues long: S-adenosylmethionine synthase (397 aa).

Residue histidine 17 coordinates ATP. Aspartate 19 lines the Mg(2+) pocket. Residue glutamate 45 participates in K(+) binding. Residues glutamate 58 and glutamine 101 each coordinate L-methionine. The tract at residues 101–111 is flexible loop; that stretch reads QSPDIAQGVDK. Residues 176-178, 243-244, aspartate 252, 258-259, and lysine 279 each bind ATP; these read DGK, RF, and RK. Residue aspartate 252 participates in L-methionine binding. Lysine 283 contributes to the L-methionine binding site.

It belongs to the AdoMet synthase family. As to quaternary structure, homotetramer; dimer of dimers. Mg(2+) serves as cofactor. It depends on K(+) as a cofactor.

Its subcellular location is the cytoplasm. The catalysed reaction is L-methionine + ATP + H2O = S-adenosyl-L-methionine + phosphate + diphosphate. Its pathway is amino-acid biosynthesis; S-adenosyl-L-methionine biosynthesis; S-adenosyl-L-methionine from L-methionine: step 1/1. In terms of biological role, catalyzes the formation of S-adenosylmethionine (AdoMet) from methionine and ATP. The overall synthetic reaction is composed of two sequential steps, AdoMet formation and the subsequent tripolyphosphate hydrolysis which occurs prior to release of AdoMet from the enzyme. This is S-adenosylmethionine synthase from Staphylococcus aureus (strain MRSA252).